The primary structure comprises 351 residues: MNGTEGQDFYVPMSNKTGVVRSPFEYPQYYLAEPWKFSALAAYMFMLILLGFPVNFLTLYVTIQHKKLRTPLNYILLNLVVADLFMVFGGFTTTMYTSMNGYFVFGVTGCYIEGFFATLGGEIALWSLVVLAVERYVVVCKPMSNFRFGENHAIMGVAFSWIMAMACAAPPLFGWSRYIPEGMQCSCGIDYYTLKPEINNESFVIYMFVVHFMIPLAVIFFCYGNLVCTVKEAAAQQQESATTQKAEKEVTRMVIIMVIAFLICWVPYASVAFYIFTNQGSDFGPIFMTIPAFFAKSSAIYNPVIYIVMNKQFRNCMITTLCCGKNPLGDEDTSAGKTETSSVSTSQVSPA.

Topologically, residues 1–36 are extracellular; that stretch reads MNGTEGQDFYVPMSNKTGVVRSPFEYPQYYLAEPWK. Residues N2 and N15 are each glycosylated (N-linked (GlcNAc...) asparagine). Residues 37–61 traverse the membrane as a helical segment; the sequence is FSALAAYMFMLILLGFPVNFLTLYV. Over 62–73 the chain is Cytoplasmic; it reads TIQHKKLRTPLN. Residues 74–96 traverse the membrane as a helical segment; it reads YILLNLVVADLFMVFGGFTTTMY. The Extracellular segment spans residues 97–110; it reads TSMNGYFVFGVTGC. A disulfide bridge connects residues C110 and C187. The helical transmembrane segment at 111–133 threads the bilayer; sequence YIEGFFATLGGEIALWSLVVLAV. The short motif at 134 to 136 is the 'Ionic lock' involved in activated form stabilization element; sequence ERY. Topologically, residues 134-152 are cytoplasmic; it reads ERYVVVCKPMSNFRFGENH. The helical transmembrane segment at 153–173 threads the bilayer; the sequence is AIMGVAFSWIMAMACAAPPLF. The Extracellular portion of the chain corresponds to 174 to 202; it reads GWSRYIPEGMQCSCGIDYYTLKPEINNES. The chain crosses the membrane as a helical span at residues 203–224; that stretch reads FVIYMFVVHFMIPLAVIFFCYG. At 225-252 the chain is on the cytoplasmic side; that stretch reads NLVCTVKEAAAQQQESATTQKAEKEVTR. A helical transmembrane segment spans residues 253-274; sequence MVIIMVIAFLICWVPYASVAFY. Residues 275 to 286 lie on the Extracellular side of the membrane; sequence IFTNQGSDFGPI. The helical transmembrane segment at 287-308 threads the bilayer; it reads FMTIPAFFAKSSAIYNPVIYIV. The residue at position 296 (K296) is an N6-(retinylidene)lysine. The Cytoplasmic segment spans residues 309-351; it reads MNKQFRNCMITTLCCGKNPLGDEDTSAGKTETSSVSTSQVSPA. S-palmitoyl cysteine attachment occurs at residues C322 and C323. Residues 331–351 are disordered; that stretch reads EDTSAGKTETSSVSTSQVSPA. Positions 340 to 351 are enriched in low complexity; that stretch reads TSSVSTSQVSPA. S341 bears the Phosphoserine; by RK and GRK7 mark.

It belongs to the G-protein coupled receptor 1 family. Opsin subfamily. Post-translationally, contains one covalently linked retinal chromophore. Upon light absorption, the covalently bound 11-cis-retinal is converted to all-trans-retinal. After hydrolysis of the Schiff base and release of the covalently bound all-trans-retinal, active rhodopsin is regenerated by binding of a fresh molecule of 11-cis-retinal.

The protein localises to the membrane. The protein resides in the cell projection. Its subcellular location is the cilium. It is found in the photoreceptor outer segment. Its function is as follows. Photoreceptor required for image-forming vision at low light intensity. Required for photoreceptor cell viability after birth. Light-induced isomerization of 11-cis to all-trans retinal triggers a conformational change that activates signaling via G-proteins. Subsequent receptor phosphorylation mediates displacement of the bound G-protein alpha subunit by arrestin and terminates signaling. This chain is Rhodopsin (RHO), found in Gallus gallus (Chicken).